Here is a 327-residue protein sequence, read N- to C-terminus: T-cell surface glycoprotein CD1a (327 aa).

The N-terminal stretch at M1 to G16 is a signal peptide. At N17–V300 the chain is on the extracellular side. Residues N37, N60, and N74 are each glycosylated (N-linked (GlcNAc...) asparagine). R90–S94 provides a ligand contact to a D-galactosylceramide. Intrachain disulfides connect C119–C183 and C223–C278. The N-linked (GlcNAc...) asparagine glycan is linked to N145. Positions 171 and 175 each coordinate a D-galactosylceramide. One can recognise an Ig-like domain in the interval P184–V291. The chain crosses the membrane as a helical span at residues G301–F321. The Cytoplasmic segment spans residues R322 to C327.

In terms of assembly, heterodimer with B2M (beta-2-microglobulin). Interacts with CD74. In terms of tissue distribution, expressed on cortical thymocytes, epidermal Langerhans cells, dendritic cells, on certain T-cell leukemias, and in various other tissues.

It is found in the cell membrane. The protein localises to the membrane raft. It localises to the endosome membrane. In terms of biological role, antigen-presenting protein that binds self and non-self lipid and glycolipid antigens and presents them to T-cell receptors on natural killer T-cells. The polypeptide is T-cell surface glycoprotein CD1a (CD1A) (Homo sapiens (Human)).